Reading from the N-terminus, the 72-residue chain is DNA-directed RNA polymerase subunit omega (72 aa).

Belongs to the RNA polymerase subunit omega family. As to quaternary structure, the RNAP catalytic core consists of 2 alpha, 1 beta, 1 beta' and 1 omega subunit. When a sigma factor is associated with the core the holoenzyme is formed, which can initiate transcription.

The catalysed reaction is RNA(n) + a ribonucleoside 5'-triphosphate = RNA(n+1) + diphosphate. Its function is as follows. Promotes RNA polymerase assembly. Latches the N- and C-terminal regions of the beta' subunit thereby facilitating its interaction with the beta and alpha subunits. In Limosilactobacillus reuteri (strain DSM 20016) (Lactobacillus reuteri), this protein is DNA-directed RNA polymerase subunit omega.